Reading from the N-terminus, the 359-residue chain is Phospho-N-acetylmuramoyl-pentapeptide-transferase (359 aa).

A run of 10 helical transmembrane segments spans residues 3 to 23, 55 to 75, 84 to 104, 120 to 140, 156 to 176, 187 to 207, 231 to 251, 255 to 275, 280 to 300, and 334 to 354; these read QILI…PVLI, VAIL…GLAL, GLLV…DDLI, TVGI…FGNA, IATV…LVSA, LDGL…LITF, LALV…WNAA, IFMG…LSVT, ILAV…VVQI, and FWLL…GEWL.

Belongs to the glycosyltransferase 4 family. MraY subfamily. Mg(2+) is required as a cofactor.

It is found in the cell membrane. It catalyses the reaction UDP-N-acetyl-alpha-D-muramoyl-L-alanyl-gamma-D-glutamyl-meso-2,6-diaminopimeloyl-D-alanyl-D-alanine + di-trans,octa-cis-undecaprenyl phosphate = di-trans,octa-cis-undecaprenyl diphospho-N-acetyl-alpha-D-muramoyl-L-alanyl-D-glutamyl-meso-2,6-diaminopimeloyl-D-alanyl-D-alanine + UMP. It functions in the pathway cell wall biogenesis; peptidoglycan biosynthesis. In terms of biological role, catalyzes the initial step of the lipid cycle reactions in the biosynthesis of the cell wall peptidoglycan: transfers peptidoglycan precursor phospho-MurNAc-pentapeptide from UDP-MurNAc-pentapeptide onto the lipid carrier undecaprenyl phosphate, yielding undecaprenyl-pyrophosphoryl-MurNAc-pentapeptide, known as lipid I. The chain is Phospho-N-acetylmuramoyl-pentapeptide-transferase from Mycobacterium sp. (strain JLS).